Consider the following 580-residue polypeptide: NADH-quinone oxidoreductase subunit C/D (580 aa).

Residues 1 to 171 (MSLDQAIPEA…PPFVLTDRLF (171 aa)) are NADH dehydrogenase I subunit C. Residues 195–580 (ELMVLNFGPH…IDFVMSDVDR (386 aa)) form an NADH dehydrogenase I subunit D region.

In the N-terminal section; belongs to the complex I 30 kDa subunit family. This sequence in the C-terminal section; belongs to the complex I 49 kDa subunit family. In terms of assembly, NDH-1 is composed of 13 different subunits. Subunits NuoB, CD, E, F, and G constitute the peripheral sector of the complex.

The protein localises to the cell inner membrane. The catalysed reaction is a quinone + NADH + 5 H(+)(in) = a quinol + NAD(+) + 4 H(+)(out). Functionally, NDH-1 shuttles electrons from NADH, via FMN and iron-sulfur (Fe-S) centers, to quinones in the respiratory chain. The immediate electron acceptor for the enzyme in this species is believed to be ubiquinone. Couples the redox reaction to proton translocation (for every two electrons transferred, four hydrogen ions are translocated across the cytoplasmic membrane), and thus conserves the redox energy in a proton gradient. This chain is NADH-quinone oxidoreductase subunit C/D, found in Cereibacter sphaeroides (strain ATCC 17029 / ATH 2.4.9) (Rhodobacter sphaeroides).